Consider the following 137-residue polypeptide: 3-hydroxyacyl-[acyl-carrier-protein] dehydratase FabZ (137 aa).

The active site involves His-46.

Belongs to the thioester dehydratase family. FabZ subfamily.

It localises to the cytoplasm. It carries out the reaction a (3R)-hydroxyacyl-[ACP] = a (2E)-enoyl-[ACP] + H2O. Involved in unsaturated fatty acids biosynthesis. Catalyzes the dehydration of short chain beta-hydroxyacyl-ACPs and long chain saturated and unsaturated beta-hydroxyacyl-ACPs. This is 3-hydroxyacyl-[acyl-carrier-protein] dehydratase FabZ from Thermotoga maritima (strain ATCC 43589 / DSM 3109 / JCM 10099 / NBRC 100826 / MSB8).